The following is a 277-amino-acid chain: MNIKLDKVSARHPAAKRDAAAALRGVSLEVSAGEQIAVIGPSGAGKTTLLHVLGCALPPSSGSLQLNARDPWRLPRSKLQLLRGELFLAPQVPPLPPRQRVVTSVLAGRLPHIGLWQSLRSLFYPTAIAQADAALARFDLSDKLFARVDRLSGGERQRVGLARALVTEASLLLVDEPLSALDPTRGQQAIASLTQAARERGATLVSTLHHVEMALQNFPRIIGLRDGELAFDLPAAQVTPERLQALYAQHLHELTGPAHEAFDLPAAATPPAVMHCR.

The ABC transporter domain maps to 3-251 (IKLDKVSARH…RLQALYAQHL (249 aa)). ATP is bound at residue 40–47 (GPSGAGKT).

The protein belongs to the ABC transporter superfamily. Phosphonates importer (TC 3.A.1.9.1) family. The complex is composed of two ATP-binding proteins (PhnC), two transmembrane proteins (PhnE) and a solute-binding protein (PhnD).

It is found in the cell inner membrane. The catalysed reaction is phosphonate(out) + ATP + H2O = phosphonate(in) + ADP + phosphate + H(+). Part of the ABC transporter complex PhnCDE involved in phosphonates import. Responsible for energy coupling to the transport system. In Polaromonas sp. (strain JS666 / ATCC BAA-500), this protein is Phosphonates import ATP-binding protein PhnC.